The primary structure comprises 95 residues: ESAT-6-like protein EsxA (95 aa).

It belongs to the WXG100 family. ESAT-6 subfamily. Forms a tight 1:1 complex with EsxB.

In Corynebacterium diphtheriae (strain ATCC 700971 / NCTC 13129 / Biotype gravis), this protein is ESAT-6-like protein EsxA.